Reading from the N-terminus, the 331-residue chain is Bifunctional nuclease 1 (331 aa).

Positions 126-261 (CVQNNPRVLR…RIAYNNGLKV (136 aa)) constitute a BFN domain. The UVR domain maps to 291–326 (EAQEFDLVRNMLVAAVEERYKDAAQYRDQLFMFRAK).

The protein belongs to the bifunctional nuclease family.

The protein localises to the nucleus. Bifunctional nuclease with both RNase and DNase activities. Involved in basal defense response. Participates in abscisic acid-derived callose deposition following infection by a necrotrophic pathogen. In Oryza sativa subsp. japonica (Rice), this protein is Bifunctional nuclease 1 (BBD1).